The following is a 423-amino-acid chain: Protein IQ-DOMAIN 16 (423 aa).

2 IQ domains span residues 99–127 and 128–150; these read RHWAAIIIQTAFRGYLSRRALRALKGIVK and LQALVRGNNVRNQAKLTLRCIKA. A coiled-coil region spans residues 231–251; that stretch reads QKKLEIAIKREKAQALALSNQ. A calmodulin-binding region spans residues 235–252; it reads EIAIKREKAQALALSNQI.

Belongs to the IQD family. In terms of assembly, binds to multiple calmodulin (CaM) in the presence of Ca(2+) and CaM-like proteins.

It is found in the cytoplasm. The protein resides in the cytoskeleton. The protein localises to the cell membrane. In terms of biological role, may be involved in cooperative interactions with calmodulins or calmodulin-like proteins. Recruits calmodulin proteins to microtubules, thus being a potential scaffold in cellular signaling and trafficking. Regulates cell shape and elongation in aerial organs (i.e. cotyledons, leaves, and hypocotyls) probably by regulating cortical microtubules (MT) arrays orientation. May associate with nucleic acids and regulate gene expression at the transcriptional or post-transcriptional level. This Arabidopsis thaliana (Mouse-ear cress) protein is Protein IQ-DOMAIN 16.